Consider the following 667-residue polypeptide: Bicarbonate transport ATP-binding protein CmpC (667 aa).

The region spanning 5–239 (VAVDNIDKVF…RPRKRMEVVE (235 aa)) is the ABC transporter domain. 42 to 49 (GHSGCGKS) lines the ATP pocket. A cmpA-like region spans residues 281–667 (LELGYVPLVA…DNPTPAPVFA (387 aa)).

Belongs to the ABC transporter superfamily. Nitrate/nitrite/cyanate uptake transporter (NitT) (TC 3.A.1.16) family. The complex is composed of two ATP-binding proteins (CmpC and CmpD), a transmembrane protein (CmpB) and a solute-binding protein (CmpA).

It is found in the cell inner membrane. Its function is as follows. Part of the ABC transporter complex CmpABCD involved in bicarbonate transport. Responsible for energy coupling to the transport system. This chain is Bicarbonate transport ATP-binding protein CmpC (cmpC), found in Synechocystis sp. (strain ATCC 27184 / PCC 6803 / Kazusa).